The chain runs to 466 residues: Ribulose bisphosphate carboxylase large chain (466 aa).

Position 5 is an N6,N6,N6-trimethyllysine (K5). Substrate-binding residues include N114 and T164. The active-site Proton acceptor is K166. K168 serves as a coordination point for substrate. Residues K192, D194, and E195 each contribute to the Mg(2+) site. K192 carries the N6-carboxylysine modification. Catalysis depends on H285, which acts as the Proton acceptor. The substrate site is built by R286, H318, and S370.

The protein belongs to the RuBisCO large chain family. Type I subfamily. In terms of assembly, heterohexadecamer of 8 large chains and 8 small chains; disulfide-linked. The disulfide link is formed within the large subunit homodimers. The cofactor is Mg(2+). The disulfide bond which can form in the large chain dimeric partners within the hexadecamer appears to be associated with oxidative stress and protein turnover.

It is found in the plastid. It localises to the chloroplast. It carries out the reaction 2 (2R)-3-phosphoglycerate + 2 H(+) = D-ribulose 1,5-bisphosphate + CO2 + H2O. The enzyme catalyses D-ribulose 1,5-bisphosphate + O2 = 2-phosphoglycolate + (2R)-3-phosphoglycerate + 2 H(+). Functionally, ruBisCO catalyzes two reactions: the carboxylation of D-ribulose 1,5-bisphosphate, the primary event in carbon dioxide fixation, as well as the oxidative fragmentation of the pentose substrate in the photorespiration process. Both reactions occur simultaneously and in competition at the same active site. The chain is Ribulose bisphosphate carboxylase large chain from Oxalis dillenii (Gray-green wood sorrel).